Reading from the N-terminus, the 294-residue chain is Melanocortin receptor 5 (294 aa).

Residues 1 to 29 (FLDLQLNATEGNVSGPSVGNTSSPCEDMG) lie on the Extracellular side of the membrane. N-linked (GlcNAc...) asparagine glycosylation is found at N7, N12, and N20. A helical transmembrane segment spans residues 30 to 53 (IEVEVFLTLGLISLLENILVIGAI). Residues 54–65 (ARNKNLHVPMYF) lie on the Cytoplasmic side of the membrane. A helical transmembrane segment spans residues 66–89 (FVCSLAVADMLVSLSNSWETITIY). The Extracellular segment spans residues 90–106 (LIANKHLVLSDTSVRHL). Residues 107–130 (DNVFDSMICISLVASMCSLLAVAV) traverse the membrane as a helical segment. Residues 131–147 (DRYVTIFYALRYQHLMT) are Cytoplasmic-facing. The helical transmembrane segment at 148 to 171 (GRRCGAIIAGIWALCTGCGPVFIV) threads the bilayer. Topologically, residues 172-178 (YYESTYV) are extracellular. A helical transmembrane segment spans residues 179–203 (VVCLVAMFLTMLLLMASLYAHMFLQ). Residues 204–231 (ARAHVRRIAALPGYRSARQRTSMKGAVT) are Cytoplasmic-facing. A helical membrane pass occupies residues 232–257 (LAMLLGVFIVCWAPFFLHLILMISCP). At 258-265 (QNLYCSCF) the chain is on the extracellular side. The chain crosses the membrane as a helical span at residues 266-289 (MSHFNMYLILIMCNSVIDPLIYAF). At 290–294 (RSQEK) the chain is on the cytoplasmic side.

This sequence belongs to the G-protein coupled receptor 1 family.

It localises to the cell membrane. Receptor for MSH (alpha, beta and gamma) and ACTH. The activity of this receptor is mediated by G proteins which activate adenylate cyclase. This receptor is a possible mediator of the immunomodulation properties of melanocortins. This is Melanocortin receptor 5 (MC5R) from Sus scrofa (Pig).